Here is a 145-residue protein sequence, read N- to C-terminus: Functional amyloid chaperone FapA (145 aa).

Residues 1–27 form the signal peptide; that stretch reads MRKRDKRLYHLLLVGCVLGSLSLTAQA.

The protein belongs to the FapA family. In terms of assembly, monomer in solution. Interacts with FapC but not FapB in vitro.

Its subcellular location is the periplasm. Functionally, an intrinsically disordered chaperone for fibril amyloid FapC that guards against fibrillation, pro within the periplasm. Upon overexpression of the endogenous six-gene locus (fapA-fapF), cells form large clumps during liquid growth, make large amounts of biofilm and produce relatively unstable amyloid fibrils. The protein is Functional amyloid chaperone FapA of Pseudomonas putida (strain ATCC 700007 / DSM 6899 / JCM 31910 / BCRC 17059 / LMG 24140 / F1).